The primary structure comprises 958 residues: Glycine dehydrogenase (decarboxylating) (958 aa).

The residue at position 705 (Lys705) is an N6-(pyridoxal phosphate)lysine.

It belongs to the GcvP family. The glycine cleavage system is composed of four proteins: P, T, L and H. Requires pyridoxal 5'-phosphate as cofactor.

It catalyses the reaction N(6)-[(R)-lipoyl]-L-lysyl-[glycine-cleavage complex H protein] + glycine + H(+) = N(6)-[(R)-S(8)-aminomethyldihydrolipoyl]-L-lysyl-[glycine-cleavage complex H protein] + CO2. Functionally, the glycine cleavage system catalyzes the degradation of glycine. The P protein binds the alpha-amino group of glycine through its pyridoxal phosphate cofactor; CO(2) is released and the remaining methylamine moiety is then transferred to the lipoamide cofactor of the H protein. This chain is Glycine dehydrogenase (decarboxylating), found in Synechococcus sp. (strain CC9902).